A 282-amino-acid chain; its full sequence is Parvulin-like PPIase (282 aa).

An N-terminal signal peptide occupies residues 1–20; that stretch reads MKKLSVIFLSVSMLSSIAFC. In terms of domain architecture, PpiC spans 138 to 231; sequence KEQIKVAHIL…FGWHIIKVLE (94 aa).

It belongs to the PpiC/parvulin rotamase family.

The protein resides in the cell outer membrane. The enzyme catalyses [protein]-peptidylproline (omega=180) = [protein]-peptidylproline (omega=0). The sequence is that of Parvulin-like PPIase (plp) from Rickettsia typhi (strain ATCC VR-144 / Wilmington).